The following is a 475-amino-acid chain: Sulfate adenylyltransferase subunit 1 (475 aa).

A tr-type G domain is found at 25-239 (KSLLRFLTCG…EVLETVEIQR (215 aa)). The segment at 34-41 (GSVDDGKS) is G1. A GTP-binding site is contributed by 34–41 (GSVDDGKS). Positions 92–96 (GITID) are G2. Positions 113-116 (DTPG) are G3. Residues 113-117 (DTPGH) and 168-171 (NKMD) each bind GTP. The G4 stretch occupies residues 168 to 171 (NKMD). Residues 206–208 (SAL) are G5.

It belongs to the TRAFAC class translation factor GTPase superfamily. Classic translation factor GTPase family. CysN/NodQ subfamily. As to quaternary structure, heterodimer composed of CysD, the smaller subunit, and CysN.

The enzyme catalyses sulfate + ATP + H(+) = adenosine 5'-phosphosulfate + diphosphate. Its pathway is sulfur metabolism; hydrogen sulfide biosynthesis; sulfite from sulfate: step 1/3. With CysD forms the ATP sulfurylase (ATPS) that catalyzes the adenylation of sulfate producing adenosine 5'-phosphosulfate (APS) and diphosphate, the first enzymatic step in sulfur assimilation pathway. APS synthesis involves the formation of a high-energy phosphoric-sulfuric acid anhydride bond driven by GTP hydrolysis by CysN coupled to ATP hydrolysis by CysD. The polypeptide is Sulfate adenylyltransferase subunit 1 (Shigella dysenteriae serotype 1 (strain Sd197)).